The primary structure comprises 521 residues: Maturase K (521 aa).

The protein belongs to the intron maturase 2 family. MatK subfamily.

The protein resides in the plastid. It is found in the chloroplast. Usually encoded in the trnK tRNA gene intron. Probably assists in splicing its own and other chloroplast group II introns. This chain is Maturase K, found in Trillium erectum (Beth root).